A 424-amino-acid chain; its full sequence is Serine--tRNA ligase (424 aa).

230–232 (TAE) serves as a coordination point for L-serine. 261 to 263 (RSE) contacts ATP. An L-serine-binding site is contributed by E284. 348–351 (EISS) lines the ATP pocket. S384 lines the L-serine pocket.

This sequence belongs to the class-II aminoacyl-tRNA synthetase family. Type-1 seryl-tRNA synthetase subfamily. As to quaternary structure, homodimer. The tRNA molecule binds across the dimer.

Its subcellular location is the cytoplasm. The catalysed reaction is tRNA(Ser) + L-serine + ATP = L-seryl-tRNA(Ser) + AMP + diphosphate + H(+). The enzyme catalyses tRNA(Sec) + L-serine + ATP = L-seryl-tRNA(Sec) + AMP + diphosphate + H(+). It participates in aminoacyl-tRNA biosynthesis; selenocysteinyl-tRNA(Sec) biosynthesis; L-seryl-tRNA(Sec) from L-serine and tRNA(Sec): step 1/1. Catalyzes the attachment of serine to tRNA(Ser). Is also able to aminoacylate tRNA(Sec) with serine, to form the misacylated tRNA L-seryl-tRNA(Sec), which will be further converted into selenocysteinyl-tRNA(Sec). In Desulfatibacillum aliphaticivorans, this protein is Serine--tRNA ligase.